A 427-amino-acid chain; its full sequence is UDP-N-acetylglucosamine 1-carboxyvinyltransferase 2 (427 aa).

Position 19–20 (19–20 (KN)) interacts with phosphoenolpyruvate. Arg91 is a binding site for UDP-N-acetyl-alpha-D-glucosamine. Cys115 serves as the catalytic Proton donor. 2-(S-cysteinyl)pyruvic acid O-phosphothioketal is present on Cys115. Positions 307 and 329 each coordinate UDP-N-acetyl-alpha-D-glucosamine.

It belongs to the EPSP synthase family. MurA subfamily.

It is found in the cytoplasm. The enzyme catalyses phosphoenolpyruvate + UDP-N-acetyl-alpha-D-glucosamine = UDP-N-acetyl-3-O-(1-carboxyvinyl)-alpha-D-glucosamine + phosphate. It functions in the pathway cell wall biogenesis; peptidoglycan biosynthesis. Its function is as follows. Cell wall formation. Adds enolpyruvyl to UDP-N-acetylglucosamine. The chain is UDP-N-acetylglucosamine 1-carboxyvinyltransferase 2 from Prochlorococcus marinus (strain SARG / CCMP1375 / SS120).